We begin with the raw amino-acid sequence, 372 residues long: GDP-mannose 4,6 dehydratase (372 aa).

Residues 1-20 (MAHAPARCPSARGSGDGEMG) form a disordered region. Residue Ala2 is modified to N-acetylalanine. Residues 30 to 35 (GITGQD), 55 to 58 (RRSS), 86 to 87 (DL), 108 to 112 (LGAQS), and Tyr123 each bind NADP(+). Thr155 is a catalytic residue. Catalysis depends on nucleophile residues Glu157 and Tyr179. 3 residues coordinate NADP(+): Lys183, His209, and Arg214. A Phosphotyrosine modification is found at Tyr323.

The protein belongs to the NAD(P)-dependent epimerase/dehydratase family. GDP-mannose 4,6-dehydratase subfamily. It depends on NADP(+) as a cofactor. In terms of tissue distribution, highly expressed in pancreas and small intestine. Expressed in thymus, protstate, colon, heart, placenta, liver and kidney. Expressed at low levels in spleen, testis, brain and lung.

The enzyme catalyses GDP-alpha-D-mannose = GDP-4-dehydro-alpha-D-rhamnose + H2O. Its pathway is nucleotide-sugar biosynthesis; GDP-L-fucose biosynthesis via de novo pathway; GDP-L-fucose from GDP-alpha-D-mannose: step 1/2. With respect to regulation, inhibited by GDP-fucose. In terms of biological role, catalyzes the conversion of GDP-D-mannose to GDP-4-dehydro-6-deoxy-D-mannose. This chain is GDP-mannose 4,6 dehydratase, found in Homo sapiens (Human).